The chain runs to 336 residues: Holliday junction branch migration complex subunit RuvB (336 aa).

The tract at residues 4-184 is large ATPase domain (RuvB-L); it reads ADRLISAGAT…FGIVQRLEFY (181 aa). Residues Ile23, Arg24, Gly65, Lys68, Thr69, Thr70, 131-133, Arg174, Tyr184, and Arg221 each bind ATP; that span reads EDY. A Mg(2+)-binding site is contributed by Thr69. The small ATPAse domain (RuvB-S) stretch occupies residues 185-255; that stretch reads QVPDLQHIVG…IAAQALDMLN (71 aa). The segment at 258–336 is head domain (RuvB-H); sequence AEGFDYMDRK…HFGITPPEMP (79 aa). The DNA site is built by Arg294, Arg313, and Arg318.

This sequence belongs to the RuvB family. Homohexamer. Forms an RuvA(8)-RuvB(12)-Holliday junction (HJ) complex. HJ DNA is sandwiched between 2 RuvA tetramers; dsDNA enters through RuvA and exits via RuvB. An RuvB hexamer assembles on each DNA strand where it exits the tetramer. Each RuvB hexamer is contacted by two RuvA subunits (via domain III) on 2 adjacent RuvB subunits; this complex drives branch migration. In the full resolvosome a probable DNA-RuvA(4)-RuvB(12)-RuvC(2) complex forms which resolves the HJ.

Its subcellular location is the cytoplasm. It catalyses the reaction ATP + H2O = ADP + phosphate + H(+). The RuvA-RuvB-RuvC complex processes Holliday junction (HJ) DNA during genetic recombination and DNA repair, while the RuvA-RuvB complex plays an important role in the rescue of blocked DNA replication forks via replication fork reversal (RFR). RuvA specifically binds to HJ cruciform DNA, conferring on it an open structure. The RuvB hexamer acts as an ATP-dependent pump, pulling dsDNA into and through the RuvAB complex. RuvB forms 2 homohexamers on either side of HJ DNA bound by 1 or 2 RuvA tetramers; 4 subunits per hexamer contact DNA at a time. Coordinated motions by a converter formed by DNA-disengaged RuvB subunits stimulates ATP hydrolysis and nucleotide exchange. Immobilization of the converter enables RuvB to convert the ATP-contained energy into a lever motion, pulling 2 nucleotides of DNA out of the RuvA tetramer per ATP hydrolyzed, thus driving DNA branch migration. The RuvB motors rotate together with the DNA substrate, which together with the progressing nucleotide cycle form the mechanistic basis for DNA recombination by continuous HJ branch migration. Branch migration allows RuvC to scan DNA until it finds its consensus sequence, where it cleaves and resolves cruciform DNA. The polypeptide is Holliday junction branch migration complex subunit RuvB (Salmonella choleraesuis (strain SC-B67)).